We begin with the raw amino-acid sequence, 64 residues long: Weak toxin CM-9a (64 aa).

Disulfide bonds link Cys-3–Cys-24, Cys-6–Cys-11, Cys-17–Cys-41, Cys-45–Cys-56, and Cys-57–Cys-62.

The protein belongs to the three-finger toxin family. Ancestral subfamily. Orphan group II sub-subfamily. Expressed by the venom gland.

It is found in the secreted. In terms of biological role, binds with low affinity to muscular (alpha-1-beta-1-delta-epsilon/CHRNA1-CHRNB1-CHRND-CHRNE) and very low affinity to neuronal (alpha-7/CHRNA7) nicotinic acetylcholine receptor (nAChR). This chain is Weak toxin CM-9a, found in Naja kaouthia (Monocled cobra).